The sequence spans 2531 residues: Highly reducing polyketide synthase ausV (2531 aa).

The region spanning 7–432 (STPIAIIGLS…GTNAHCVMET (426 aa)) is the Ketosynthase family 3 (KS3) domain. Active-site for beta-ketoacyl synthase activity residues include Cys-180, His-315, and His-355. The tract at residues 554 to 882 (FVFTGQGAQW…HHTLLESMGS (329 aa)) is malonyl-CoA:ACP transacylase (MAT) domain. Ser-644 acts as the For malonyltransferase activity in catalysis. Residues 939-1069 (HDLCGIRVED…GSVLAGTPSD (131 aa)) are N-terminal hotdog fold. Residues 939–1238 (HDLCGIRVED…LATLSVRSGD (300 aa)) enclose the PKS/mFAS DH domain. The segment at 940–1236 (DLCGIRVEDD…LELATLSVRS (297 aa)) is dehydratase (DH) domain. The Proton acceptor; for dehydratase activity role is filled by His-971. The segment at 1087–1238 (YVETTPRQAY…LATLSVRSGD (152 aa)) is C-terminal hotdog fold. The active-site Proton donor; for dehydratase activity is Asp-1152. The methyltransferase (CMet) domain stretch occupies residues 1414–1592 (SSYLRLHARN…DTGFSGVDIS (179 aa)). The enoyl reductase (ER) domain stretch occupies residues 1832–2133 (LRFVQDPAYW…SGGAKPGCSR (302 aa)). Residues 2156 to 2331 (HGRALVPDFH…AGVSLSLGFI (176 aa)) are ketoreductase (KR) domain. Positions 2444–2521 (AAATAVLDAL…ELARDLALRS (78 aa)) constitute a Carrier domain. The residue at position 2481 (Ser-2481) is an O-(pantetheine 4'-phosphoryl)serine.

Its pathway is secondary metabolite biosynthesis; terpenoid biosynthesis. Highly reducing polyketide synthase; part of the gene cluster that mediates the biosynthesis of calidodehydroaustin, a fungal meroterpenoid. The first step of the pathway is the synthesis of 3,5-dimethylorsellinic acid by the polyketide synthase ausA. 3,5-dimethylorsellinic acid is then prenylated by the polyprenyl transferase ausN. Further epoxidation by the FAD-dependent monooxygenase ausM and cyclization by the probable terpene cyclase ausL lead to the formation of protoaustinoid A. Protoaustinoid A is then oxidized to spiro-lactone preaustinoid A3 by the combined action of the FAD-binding monooxygenases ausB and ausC, and the dioxygenase ausE. Acid-catalyzed keto-rearrangement and ring contraction of the tetraketide portion of preaustinoid A3 by ausJ lead to the formation of preaustinoid A4. The aldo-keto reductase ausK, with the help of ausH, is involved in the next step by transforming preaustinoid A4 into isoaustinone which is in turn hydroxylated by the P450 monooxygenase ausI to form austinolide. The cytochrome P450 monooxygenase ausG modifies austinolide to austinol. Austinol is further acetylated to austin by the O-acetyltransferase ausP, which spontaneously changes to dehydroaustin. The cytochrome P450 monooxygenase ausR then converts dehydroaustin is into 7-dehydrodehydroaustin. The hydroxylation catalyzed by ausR permits the O-acetyltransferase ausQ to add an additional acetyl group to the molecule, leading to the formation of acetoxydehydroaustin. The short chain dehydrogenase ausT catalyzes the reduction of the double bond present between carbon atoms 1 and 2 to convert 7-dehydrodehydroaustin into 1,2-dihydro-7-hydroxydehydroaustin. AusQ catalyzes not only an acetylation reaction but also the addition of the PKS ausV diketide product to 1,2-dihydro-7-hydroxydehydroaustin, forming precalidodehydroaustin. Finally, the iron/alpha-ketoglutarate-dependent dioxygenase converts precalidodehydroaustin into calidodehydroaustin. In Aspergillus calidoustus, this protein is Highly reducing polyketide synthase ausV.